The following is a 331-amino-acid chain: D-alanine--D-alanine ligase (331 aa).

In terms of domain architecture, ATP-grasp spans K121–R327. A151–E206 serves as a coordination point for ATP. 3 residues coordinate Mg(2+): D281, E294, and N296.

This sequence belongs to the D-alanine--D-alanine ligase family. The cofactor is Mg(2+). Mn(2+) is required as a cofactor.

Its subcellular location is the cytoplasm. The enzyme catalyses 2 D-alanine + ATP = D-alanyl-D-alanine + ADP + phosphate + H(+). Its pathway is cell wall biogenesis; peptidoglycan biosynthesis. Cell wall formation. The chain is D-alanine--D-alanine ligase from Vibrio atlanticus (strain LGP32) (Vibrio splendidus (strain Mel32)).